A 247-amino-acid polypeptide reads, in one-letter code: Golgi-associated RAB2 interactor protein 5A (247 aa).

Over residues 1 to 16 (MGPPLWPDLQEPPPPG) the composition is skewed to pro residues. 2 disordered regions span residues 1-22 (MGPP…SQIR) and 60-92 (GDIA…PTGR).

The protein belongs to the GARIN family. In terms of assembly, interacts (via N-terminus) with RAB2B (in GTP-bound form).

Its subcellular location is the golgi apparatus. In terms of biological role, RAB2B effector protein which promotes cytosolic DNA-induced innate immune responses. Regulates IFN responses against DNA viruses by regulating the CGAS-STING signaling axis. In Homo sapiens (Human), this protein is Golgi-associated RAB2 interactor protein 5A.